A 127-amino-acid polypeptide reads, in one-letter code: Multiple antibiotic resistance protein MarA (127 aa).

Residues 12–110 form the HTH araC/xylS-type domain; the sequence is HSILDWIEDN…DVPPHKYRMT (99 aa). 2 consecutive DNA-binding regions (H-T-H motif) follow at residues 29–50 and 77–100; these read EKVS…KKET and ILYL…KNYF.

Monomer.

May be a transcriptional activator of genes involved in the multiple antibiotic resistance (Mar) phenotype. It can also activate genes such as sodA, zwf and micF. The sequence is that of Multiple antibiotic resistance protein MarA (marA) from Escherichia coli (strain K12).